The sequence spans 554 residues: Intraflagellar transport protein 56 (554 aa).

The tract at residues 1–27 (MMLSRAKPAVGGESPHTDKRKKKGRKI) is disordered. The span at 18–27 (DKRKKKGRKI) shows a compositional bias: basic residues. TPR repeat units lie at residues 57 to 90 (DDTNLWIGYCAFHLGDYKRALEEYENATKEENCN), 92 to 125 (EVWVNLACTYFFLGMYKQAEAAGFKAPKSRLQNR), 151 to 184 (KEDQLSLASIHYMRSHYQEAIDIYKRILLDNREY), and 468 to 501 (ANDCYKMGQFYYSAKAFDVLERLDPNPEYWEGKR).

This sequence belongs to the IFT56 family. Component of the IFT complex B. Interacts with IFT46; the interaction is direct. In terms of tissue distribution, high expression detected in testis. Detected also retina, kidney, lung and brain tissue. The expression level is low in spleen. Expressed in the developing liver. Present in the airway epithelial cells and the testes (at protein level).

The protein resides in the cell projection. It localises to the cilium. Component of the intraflagellar transport (IFT) complex B required for transport of proteins in the motile cilium. Required for transport of specific ciliary cargo proteins related to motility, while it is neither required for IFT complex B assembly or motion nor for cilium assembly. Required for efficient coupling between the accumulation of GLI2 and GLI3 at the ciliary tips and their dissociation from the negative regulator SUFU. Plays a key role in maintaining the integrity of the IFT complex B and the proper ciliary localization of the IFT complex B components. Not required for IFT complex A ciliary localization or function. Essential for maintaining proper microtubule organization within the ciliary axoneme. This Mus musculus (Mouse) protein is Intraflagellar transport protein 56.